The primary structure comprises 490 residues: Glutamate--tRNA ligase (490 aa).

Positions 15 to 25 match the 'HIGH' region motif; it reads PSPTGYLHVGG. The 'KMSKS' region signature appears at 259–263; that stretch reads KLSKR. Lys-262 contacts ATP.

The protein belongs to the class-I aminoacyl-tRNA synthetase family. Glutamate--tRNA ligase type 1 subfamily. As to quaternary structure, monomer.

Its subcellular location is the cytoplasm. The enzyme catalyses tRNA(Glu) + L-glutamate + ATP = L-glutamyl-tRNA(Glu) + AMP + diphosphate. Functionally, catalyzes the attachment of glutamate to tRNA(Glu) in a two-step reaction: glutamate is first activated by ATP to form Glu-AMP and then transferred to the acceptor end of tRNA(Glu). The chain is Glutamate--tRNA ligase from Bdellovibrio bacteriovorus (strain ATCC 15356 / DSM 50701 / NCIMB 9529 / HD100).